The primary structure comprises 255 residues: 5'-nucleotidase SurE (255 aa).

Residues D8, D9, S39, and N91 each coordinate a divalent metal cation.

The protein belongs to the SurE nucleotidase family. It depends on a divalent metal cation as a cofactor.

The protein localises to the cytoplasm. It catalyses the reaction a ribonucleoside 5'-phosphate + H2O = a ribonucleoside + phosphate. In terms of biological role, nucleotidase that shows phosphatase activity on nucleoside 5'-monophosphates. The sequence is that of 5'-nucleotidase SurE from Acinetobacter baumannii (strain SDF).